Reading from the N-terminus, the 881-residue chain is MRVLKYFRAPSSLRHRSSPMAQFLRRFSSSPMANEDEFQSPVEPSQQQSQDCVSESYLIGFVIANIVGLKYYSGRINGREMVGLVREPLNVYDNNAIRVLNTRSEQVGHIERTVAAVLAPMIDSHTIVVEGIVPNTRSNSNRYRIPCQIHVFAKLEASSTVKSTISRGGLVLISESDTSFGLSEAVVVKEQMGNGDKRSVDKIFKLVDENVKLMGKLVAAEPPREVIKSELFAHQKEGLGWLLHREKSGELPPFWEEKDGEFLNTLTNYRSDKRPDPLRGGVFADDMGLGKTLTLLSLIAFDRYGNASTSTPTEEPLDGEGDKIEKKGKKRGRGKSSESVTRKKLKTDDVVGMNVSQKTTLIVCPPSVISAWITQLEEHTVPGILKVYMYHGGERTDDVNELMKYDIVLTTYGTLAVEESWEDSPVKKMEWLRIILDEAHTIKNANAQQSRVVCKLKASRRWAVTGTPIQNGSFDLYSLMAFLRFEPFSIKSYWQSLIQRPLGQGNKKGLSRLQVLMATISLRRTKEKSLIGLPPKTVETCYVELSPEERQLYDHMEGEAKGVVQNLINNGSLMRNYSTVLSIILRLRQLCDDMSLCPPELRSFTTSTSVEDVTDKPELLQKLVAALQDGEDFDCPICISPPTNIIITRCAHIFCRACILQTLQRSKPLCPLCRGSLTQSDLYNAPPPPPDSSNTDGEDAKSSTKSSKVSALLSLLMASRQENPNTKSVVFSQFRKMLLLLETPLKAAGFTILRLDGAMTVKKRTQVIGEFGNPELTGPVVLLASLKASGTGINLTAASRVYLFDPWWNPAVEEQAMDRIHRIGQKQEVKMIRMIARNSIEERVLELQQKKKNLANEAFKRRQKKDEREVNVEDVVALMSL.

Positions 272–486 (DKRPDPLRGG…YSLMAFLRFE (215 aa)) constitute a Helicase ATP-binding domain. 285–292 (DDMGLGKT) serves as a coordination point for ATP. Positions 308–343 (STSTPTEEPLDGEGDKIEKKGKKRGRGKSSESVTRK) are disordered. The DEAH box motif lies at 437–440 (DEAH). The RING-type zinc-finger motif lies at 635 to 674 (CPICISPPTNIIITRCAHIFCRACILQTLQRSKPLCPLCR). Residues 681–703 (DLYNAPPPPPDSSNTDGEDAKSS) form a disordered region. In terms of domain architecture, Helicase C-terminal spans 711–876 (ALLSLLMASR…EREVNVEDVV (166 aa)).

The protein belongs to the SNF2/RAD54 helicase family. RAD16 subfamily.

The protein localises to the nucleus. Possesses intrinsic ATP-dependent nucleosome-remodeling activity. This activity may be required for transcriptional activation or repression of specific target promoters. This Arabidopsis thaliana (Mouse-ear cress) protein is Putative SWI/SNF-related matrix-associated actin-dependent regulator of chromatin subfamily A member 3-like 1.